Reading from the N-terminus, the 273-residue chain is Putative pyruvate, phosphate dikinase regulatory protein (273 aa).

Residue 153 to 160 participates in ADP binding; the sequence is GVSRTSKS.

Belongs to the pyruvate, phosphate/water dikinase regulatory protein family. PDRP subfamily.

The catalysed reaction is N(tele)-phospho-L-histidyl/L-threonyl-[pyruvate, phosphate dikinase] + ADP = N(tele)-phospho-L-histidyl/O-phospho-L-threonyl-[pyruvate, phosphate dikinase] + AMP + H(+). The enzyme catalyses N(tele)-phospho-L-histidyl/O-phospho-L-threonyl-[pyruvate, phosphate dikinase] + phosphate + H(+) = N(tele)-phospho-L-histidyl/L-threonyl-[pyruvate, phosphate dikinase] + diphosphate. In terms of biological role, bifunctional serine/threonine kinase and phosphorylase involved in the regulation of the pyruvate, phosphate dikinase (PPDK) by catalyzing its phosphorylation/dephosphorylation. This chain is Putative pyruvate, phosphate dikinase regulatory protein, found in Ehrlichia ruminantium (strain Welgevonden).